A 487-amino-acid chain; its full sequence is Bifunctional protein HldE (487 aa).

The tract at residues M1–G326 is ribokinase. Residue N205 to E208 coordinates ATP. The active site involves D275. Residues F356 to Y487 form a cytidylyltransferase region.

This sequence in the N-terminal section; belongs to the carbohydrate kinase PfkB family. The protein in the C-terminal section; belongs to the cytidylyltransferase family. As to quaternary structure, homodimer.

The enzyme catalyses D-glycero-beta-D-manno-heptose 7-phosphate + ATP = D-glycero-beta-D-manno-heptose 1,7-bisphosphate + ADP + H(+). It carries out the reaction D-glycero-beta-D-manno-heptose 1-phosphate + ATP + H(+) = ADP-D-glycero-beta-D-manno-heptose + diphosphate. It participates in nucleotide-sugar biosynthesis; ADP-L-glycero-beta-D-manno-heptose biosynthesis; ADP-L-glycero-beta-D-manno-heptose from D-glycero-beta-D-manno-heptose 7-phosphate: step 1/4. The protein operates within nucleotide-sugar biosynthesis; ADP-L-glycero-beta-D-manno-heptose biosynthesis; ADP-L-glycero-beta-D-manno-heptose from D-glycero-beta-D-manno-heptose 7-phosphate: step 3/4. In terms of biological role, catalyzes the phosphorylation of D-glycero-D-manno-heptose 7-phosphate at the C-1 position to selectively form D-glycero-beta-D-manno-heptose-1,7-bisphosphate. Catalyzes the ADP transfer from ATP to D-glycero-beta-D-manno-heptose 1-phosphate, yielding ADP-D-glycero-beta-D-manno-heptose. This is Bifunctional protein HldE from Citrifermentans bemidjiense (strain ATCC BAA-1014 / DSM 16622 / JCM 12645 / Bem) (Geobacter bemidjiensis).